Here is a 328-residue protein sequence, read N- to C-terminus: Global transcription regulator sge1 (328 aa).

Disordered regions lie at residues 94–120 (PGEK…PRQR) and 251–293 (QMHQ…QYVH). 3 stretches are compositionally biased toward low complexity: residues 106-116 (KSTTQSGGISK), 251-261 (QMHQPQVHQPL), and 282-293 (AHQPQVHQQYVH).

It belongs to the MIT1/WOR1 family.

It localises to the nucleus. Functionally, global transcriptional regulator of transcription that impacts, but is not absolutely required for secondary metabolism and pathogenicity on maize. Regulates synthesis of multiple secondary metabolites, including fumonisins and fusarins. The protein is Global transcription regulator sge1 of Gibberella moniliformis (strain M3125 / FGSC 7600) (Maize ear and stalk rot fungus).